The chain runs to 345 residues: Fructose-bisphosphate aldolase (345 aa).

Ser-53 contacts D-glyceraldehyde 3-phosphate. Asp-95 (proton donor) is an active-site residue. Residues His-96, Asp-131, Glu-161, and His-212 each contribute to the Zn(2+) site. Gly-213 lines the dihydroxyacetone phosphate pocket. His-252 lines the Zn(2+) pocket. Dihydroxyacetone phosphate-binding positions include 253–255 (GGS) and 274–277 (NVDT).

It belongs to the class II fructose-bisphosphate aldolase family. Zn(2+) serves as cofactor.

The enzyme catalyses beta-D-fructose 1,6-bisphosphate = D-glyceraldehyde 3-phosphate + dihydroxyacetone phosphate. It functions in the pathway carbohydrate degradation; glycolysis; D-glyceraldehyde 3-phosphate and glycerone phosphate from D-glucose: step 4/4. Its function is as follows. Catalyzes the aldol condensation of dihydroxyacetone phosphate (DHAP or glycerone-phosphate) with glyceraldehyde 3-phosphate (G3P) to form fructose 1,6-bisphosphate (FBP) in gluconeogenesis and the reverse reaction in glycolysis. The sequence is that of Fructose-bisphosphate aldolase (fba) from Mycobacterium leprae (strain TN).